A 407-amino-acid polypeptide reads, in one-letter code: Digeranylgeranylglycerophospholipid reductase (407 aa).

FAD-binding residues include A15, E34, C45, A46, G48, R99, A123, D281, G293, and I294.

Belongs to the geranylgeranyl reductase family. DGGGPL reductase subfamily. FAD is required as a cofactor.

The enzyme catalyses a 2,3-bis-O-phytanyl-sn-glycerol 1-phospholipid + 8 oxidized 2[4Fe-4S]-[ferredoxin] = a 2,3-bis-O-(geranylgeranyl)-sn-glycerol 1-phospholipid + 8 reduced 2[4Fe-4S]-[ferredoxin] + 16 H(+). It catalyses the reaction 2,3-bis-O-(phytanyl)-sn-glycerol 1-phosphate + 8 oxidized 2[4Fe-4S]-[ferredoxin] = 2,3-bis-O-(geranylgeranyl)-sn-glycerol 1-phosphate + 8 reduced 2[4Fe-4S]-[ferredoxin] + 16 H(+). It carries out the reaction a 2,3-bis-O-phytanyl-sn-glycerol 1-phospholipid + 8 A = a 2,3-bis-O-(geranylgeranyl)-sn-glycerol 1-phospholipid + 8 AH2. The catalysed reaction is CDP-2,3-bis-O-(geranylgeranyl)-sn-glycerol + 8 AH2 = CDP-2,3-bis-O-(phytanyl)-sn-glycerol + 8 A. The enzyme catalyses archaetidylserine + 8 AH2 = 2,3-bis-O-phytanyl-sn-glycero-3-phospho-L-serine + 8 A. Its pathway is membrane lipid metabolism; glycerophospholipid metabolism. Its function is as follows. Is involved in the reduction of 2,3-digeranylgeranylglycerophospholipids (unsaturated archaeols) into 2,3-diphytanylglycerophospholipids (saturated archaeols) in the biosynthesis of archaeal membrane lipids. Catalyzes the formation of archaetidic acid (2,3-di-O-phytanyl-sn-glyceryl phosphate) from 2,3-di-O-geranylgeranylglyceryl phosphate (DGGGP) via the hydrogenation of each double bond of the isoprenoid chains. Requires the adjacently encoded ferredoxin MA_1485 as the electron donor. Is also probably able to reduce double bonds of geranyl groups in CDP-2,3-bis-O-(geranylgeranyl)-sn-glycerol and archaetidylserine, thus acting at various stages in the biosynthesis of archaeal membrane lipids. The chain is Digeranylgeranylglycerophospholipid reductase from Methanosarcina acetivorans (strain ATCC 35395 / DSM 2834 / JCM 12185 / C2A).